We begin with the raw amino-acid sequence, 427 residues long: Glutamate-1-semialdehyde 2,1-aminomutase (427 aa).

Residue Lys265 is modified to N6-(pyridoxal phosphate)lysine.

The protein belongs to the class-III pyridoxal-phosphate-dependent aminotransferase family. HemL subfamily. As to quaternary structure, homodimer. It depends on pyridoxal 5'-phosphate as a cofactor.

The protein localises to the cytoplasm. It carries out the reaction (S)-4-amino-5-oxopentanoate = 5-aminolevulinate. The protein operates within porphyrin-containing compound metabolism; protoporphyrin-IX biosynthesis; 5-aminolevulinate from L-glutamyl-tRNA(Glu): step 2/2. This is Glutamate-1-semialdehyde 2,1-aminomutase from Pseudomonas aeruginosa (strain LESB58).